Consider the following 149-residue polypeptide: MKVIATNKKAYSDYNILETYEAGIELRGTEVKALRESGANFKDSFCRIKNGEVFLLNLNIPQYRNGNLNNHDPERPRRLLLHKKEIHRLIGKVKEQGLTIIPTKIYFNSRGLVKVEIAVAKGKKKYDKREDIKKREINRKINEYLKRNR.

This sequence belongs to the SmpB family.

It localises to the cytoplasm. Functionally, required for rescue of stalled ribosomes mediated by trans-translation. Binds to transfer-messenger RNA (tmRNA), required for stable association of tmRNA with ribosomes. tmRNA and SmpB together mimic tRNA shape, replacing the anticodon stem-loop with SmpB. tmRNA is encoded by the ssrA gene; the 2 termini fold to resemble tRNA(Ala) and it encodes a 'tag peptide', a short internal open reading frame. During trans-translation Ala-aminoacylated tmRNA acts like a tRNA, entering the A-site of stalled ribosomes, displacing the stalled mRNA. The ribosome then switches to translate the ORF on the tmRNA; the nascent peptide is terminated with the 'tag peptide' encoded by the tmRNA and targeted for degradation. The ribosome is freed to recommence translation, which seems to be the essential function of trans-translation. The polypeptide is SsrA-binding protein (Thermosipho africanus (strain TCF52B)).